The chain runs to 287 residues: Transmembrane protein 163 (287 aa).

The segment at 1 to 63 is disordered; sequence METAAGSERR…ESGQFSDGLE (63 aa). At 1–86 the chain is on the cytoplasmic side; the sequence is METAAGSERR…HEAQNYRKKA (86 aa). A phosphoserine mark is found at serine 11, serine 53, serine 55, and serine 59. The required for interaction with MCOLN1 stretch occupies residues 40–70; the sequence is EPPQPEEERQLRISESGQFSDGLEDRGLLES. A helical transmembrane segment spans residues 87–107; the sequence is LWVSWFSIIVTLALAVAAFTV. The Extracellular segment spans residues 108 to 114; sequence SVMRYSA. The chain crosses the membrane as a helical span at residues 115 to 135; the sequence is SAFGFAFDAILDVLSSAIVLW. Residues 136-148 are Cytoplasmic-facing; the sequence is RYSNAAAVHSAHR. A helical membrane pass occupies residues 149–169; the sequence is EYIACVILGVIFLLSSVCIVV. Residues 170–185 lie on the Extracellular side of the membrane; that stretch reads KAIHDLSTKLLPEVDD. The chain crosses the membrane as a helical span at residues 186-206; sequence FLFSVSILSGILCSILAVLKF. The Cytoplasmic segment spans residues 207–215; the sequence is MLGKVLTSR. Residues 216 to 236 traverse the membrane as a helical segment; the sequence is ALITDGFNSLVGGVMGFSILL. The Extracellular segment spans residues 237–253; sequence SAEVFKHNSAVWYLDGS. The chain crosses the membrane as a helical span at residues 254-274; the sequence is IGVLIGLTIFAYGVKLLIDMV. The Cytoplasmic segment spans residues 275-287; that stretch reads PRVRQTRHYEMFE.

This sequence belongs to the TMEM163 family. As to quaternary structure, homodimer. Interacts with MCOLN1/TRPML1. Interacts with SLC30A1, SLC30A2, SLC30A3 and SLC30A4.

It localises to the cytoplasmic vesicle. The protein localises to the secretory vesicle. Its subcellular location is the synaptic vesicle membrane. It is found in the early endosome membrane. The protein resides in the late endosome membrane. It localises to the lysosome membrane. The protein localises to the cell membrane. It catalyses the reaction Zn(2+)(in) = Zn(2+)(out). In terms of biological role, zinc ion transporter that mediates zinc efflux and plays a crucial role in intracellular zinc homeostasis. Binds the divalent cations Zn(2+), Ni(2+), and to a minor extent Cu(2+). Is a functional modulator of P2X purinoceptors, including P2RX1, P2RX3, P2RX4 and P2RX7. Plays a role in central nervous system development and is required for myelination, and survival and proliferation of oligodendrocytes. The polypeptide is Transmembrane protein 163 (TMEM163) (Bos taurus (Bovine)).